Reading from the N-terminus, the 426-residue chain is MCKEIYDLIAKELYRQQSTIELIASENFTSKAVMLAQGSILTNKYAEGYINKRYYGGCEFIDEVESLAIDKVKKLFKCNYANVQPHSGSQANQAVFLALLKPGDTILAMDLNSGGHLTHGAKPNLSGKFFNAVHYCVNKDSYLIDYNEVEMLAQQHKPKLIIVGYSAYSRKINFATFKEIADKVGAYLLADIAHIAGLVATEYHSSPIPYAHVVTSTTHKTLRGPRGGLILTNDESISKKINSAVFPGMQGGPLMHVIAAKAIAFSEALMPQYKEYINQVMLNAKVLAKLLQDRGYNILTGGTDNHMLLVDLRGKNITGQEAEYLLDAAGITCNKQVMPFDTTSPTITSGIRLGTPACTTRGFKENDFITVGKYIADILDNIAIIKSAKKNEDITITEIENSLDSVITHTKQHVQELCNSFPIYTN.

(6S)-5,6,7,8-tetrahydrofolate is bound by residues leucine 111 and 115–117 (GHL). N6-(pyridoxal phosphate)lysine is present on lysine 220.

The protein belongs to the SHMT family. Homodimer. The cofactor is pyridoxal 5'-phosphate.

It is found in the cytoplasm. It carries out the reaction (6R)-5,10-methylene-5,6,7,8-tetrahydrofolate + glycine + H2O = (6S)-5,6,7,8-tetrahydrofolate + L-serine. It participates in one-carbon metabolism; tetrahydrofolate interconversion. The protein operates within amino-acid biosynthesis; glycine biosynthesis; glycine from L-serine: step 1/1. In terms of biological role, catalyzes the reversible interconversion of serine and glycine with tetrahydrofolate (THF) serving as the one-carbon carrier. This reaction serves as the major source of one-carbon groups required for the biosynthesis of purines, thymidylate, methionine, and other important biomolecules. Also exhibits THF-independent aldolase activity toward beta-hydroxyamino acids, producing glycine and aldehydes, via a retro-aldol mechanism. The polypeptide is Serine hydroxymethyltransferase (Orientia tsutsugamushi (strain Ikeda) (Rickettsia tsutsugamushi)).